The following is a 430-amino-acid chain: Small ribosomal subunit protein uS3m (430 aa).

The protein belongs to the universal ribosomal protein uS3 family.

The protein resides in the mitochondrion. The chain is Small ribosomal subunit protein uS3m (RPS3) from Marchantia polymorpha (Common liverwort).